The following is a 372-amino-acid chain: 4-hydroxy-3-methylbut-2-en-1-yl diphosphate synthase (flavodoxin) (372 aa).

The [4Fe-4S] cluster site is built by cysteine 270, cysteine 273, cysteine 305, and glutamate 312.

This sequence belongs to the IspG family. Requires [4Fe-4S] cluster as cofactor.

It catalyses the reaction (2E)-4-hydroxy-3-methylbut-2-enyl diphosphate + oxidized [flavodoxin] + H2O + 2 H(+) = 2-C-methyl-D-erythritol 2,4-cyclic diphosphate + reduced [flavodoxin]. The protein operates within isoprenoid biosynthesis; isopentenyl diphosphate biosynthesis via DXP pathway; isopentenyl diphosphate from 1-deoxy-D-xylulose 5-phosphate: step 5/6. In terms of biological role, converts 2C-methyl-D-erythritol 2,4-cyclodiphosphate (ME-2,4cPP) into 1-hydroxy-2-methyl-2-(E)-butenyl 4-diphosphate. The chain is 4-hydroxy-3-methylbut-2-en-1-yl diphosphate synthase (flavodoxin) from Vibrio vulnificus (strain CMCP6).